The chain runs to 449 residues: Tubulin alpha chain (449 aa).

The MREC motif signature appears at 1–4 (MREC). A GTP-binding site is contributed by glutamine 11. Lysine 40 carries the post-translational modification N6-acetyllysine. GTP-binding residues include glutamate 71, serine 140, glycine 144, threonine 145, threonine 179, asparagine 206, and asparagine 228. Residue glutamate 71 participates in Mg(2+) binding. Glutamate 254 is an active-site residue. Glutamate 443 is subject to 5-glutamyl polyglutamate.

This sequence belongs to the tubulin family. Dimer of alpha and beta chains. A typical microtubule is a hollow water-filled tube with an outer diameter of 25 nm and an inner diameter of 15 nM. Alpha-beta heterodimers associate head-to-tail to form protofilaments running lengthwise along the microtubule wall with the beta-tubulin subunit facing the microtubule plus end conferring a structural polarity. Microtubules usually have 13 protofilaments but different protofilament numbers can be found in some organisms and specialized cells. The cofactor is Mg(2+). Post-translationally, some glutamate residues at the C-terminus are polyglycylated, resulting in polyglycine chains on the gamma-carboxyl group. Glycylation is mainly limited to tubulin incorporated into axonemes (cilia and flagella) whereas glutamylation is prevalent in neuronal cells, centrioles, axonemes, and the mitotic spindle. Both modifications can coexist on the same protein on adjacent residues, and lowering polyglycylation levels increases polyglutamylation, and reciprocally. The precise function of polyglycylation is still unclear. Some glutamate residues at the C-terminus are polyglutamylated, resulting in polyglutamate chains on the gamma-carboxyl group. Polyglutamylation plays a key role in microtubule severing by spastin (SPAST). SPAST preferentially recognizes and acts on microtubules decorated with short polyglutamate tails: severing activity by SPAST increases as the number of glutamates per tubulin rises from one to eight, but decreases beyond this glutamylation threshold. In terms of processing, acetylation of alpha chains at Lys-40 is located inside the microtubule lumen. This modification has been correlated with increased microtubule stability, intracellular transport and ciliary assembly. Post-translationally, undergoes a tyrosination/detyrosination cycle, the cyclic removal and re-addition of a C-terminal tyrosine residue by the enzymes tubulin tyrosine carboxypeptidase (MATCAP1, VASH1 or VASH2) and tubulin tyrosine ligase (TTL), respectively. Tyrosination promotes microtubule interaction with CAP-Gly microtubule plus-end tracking proteins. Tyrosinated tubulins regulate the initiation of dynein-driven motility. In terms of processing, detyrosination is involved in metaphase plate congression by guiding chromosomes during mitosis. Detyrosination increases microtubules-dependent mechanotransduction in dystrophic cardiac and skeletal muscle. In cardiomyocytes, detyrosinated microtubules are required to resist to contractile compression during contraction.

It is found in the cytoplasm. The protein localises to the cytoskeleton. The catalysed reaction is GTP + H2O = GDP + phosphate + H(+). Functionally, tubulin is the major constituent of microtubules, a cylinder consisting of laterally associated linear protofilaments composed of alpha- and beta-tubulin heterodimers. Microtubules grow by the addition of GTP-tubulin dimers to the microtubule end, where a stabilizing cap forms. Below the cap, tubulin dimers are in GDP-bound state, owing to GTPase activity of alpha-tubulin. The chain is Tubulin alpha chain (tuba) from Xenopus tropicalis (Western clawed frog).